A 72-amino-acid polypeptide reads, in one-letter code: Large ribosomal subunit protein uL29 (72 aa).

It belongs to the universal ribosomal protein uL29 family.

The polypeptide is Large ribosomal subunit protein uL29 (Thermodesulfovibrio yellowstonii (strain ATCC 51303 / DSM 11347 / YP87)).